The sequence spans 229 residues: Aminopyrimidine aminohydrolase (229 aa).

D44 provides a ligand contact to substrate. Residue C137 is the Nucleophile of the active site. Residues Y141 and Y167 each coordinate substrate. Catalysis depends on E208, which acts as the Proton donor.

This sequence belongs to the TenA family. Homotetramer.

It catalyses the reaction 4-amino-5-aminomethyl-2-methylpyrimidine + H2O = 4-amino-5-hydroxymethyl-2-methylpyrimidine + NH4(+). It carries out the reaction thiamine + H2O = 5-(2-hydroxyethyl)-4-methylthiazole + 4-amino-5-hydroxymethyl-2-methylpyrimidine + H(+). Its pathway is cofactor biosynthesis; thiamine diphosphate biosynthesis. Its function is as follows. Catalyzes an amino-pyrimidine hydrolysis reaction at the C5' of the pyrimidine moiety of thiamine compounds, a reaction that is part of a thiamine salvage pathway. Thus, catalyzes the conversion of 4-amino-5-aminomethyl-2-methylpyrimidine to 4-amino-5-hydroxymethyl-2-methylpyrimidine (HMP). Is also able to catalyze the hydrolytic cleavage of thiamine; however, this thiaminase activity may not be physiologically relevant. Therefore, is probably involved in the regeneration of the thiamine pyrimidine from thiamine degraded products present in the environment, rather than in thiamine degradation. The polypeptide is Aminopyrimidine aminohydrolase (Staphylococcus aureus (strain MRSA252)).